The sequence spans 271 residues: 2-amino-3,7-dideoxy-D-threo-hept-6-ulosonate synthase (271 aa).

Asp33 functions as the Proton acceptor in the catalytic mechanism. 1-deoxy-D-threo-hexo-2,5-diulose 6-phosphate is bound by residues 33 to 37 and 153 to 155; these read DHGVS and YPR. Tyr153 (proton donor) is an active-site residue. Lys184 functions as the Schiff-base intermediate with substrate in the catalytic mechanism. Residues 209-210 and 236-237 each bind 1-deoxy-D-threo-hexo-2,5-diulose 6-phosphate; these read GG and GR.

It belongs to the DeoC/FbaB aldolase family. ADHS subfamily. In terms of assembly, homodecamer.

It catalyses the reaction 1-deoxy-D-threo-hexo-2,5-diulose 6-phosphate + L-aspartate 4-semialdehyde = 2,3-dioxopropyl phosphate + 2-amino-2,3,7-trideoxy-D-lyxo-hept-6-ulosonate. Functionally, catalyzes a transaldol reaction between 6-deoxy-5-ketofructose 1-phosphate (DKFP) and L-aspartate semialdehyde (ASA) with an elimination of hydroxypyruvaldehyde phosphate to yield 2-amino-3,7-dideoxy-D-threo-hept-6-ulosonate (ADH). Plays a key role in an alternative pathway of the biosynthesis of 3-dehydroquinate (DHQ), which is involved in the canonical pathway for the biosynthesis of aromatic amino acids. The protein is 2-amino-3,7-dideoxy-D-threo-hept-6-ulosonate synthase of Methanococcus aeolicus (strain ATCC BAA-1280 / DSM 17508 / OCM 812 / Nankai-3).